Reading from the N-terminus, the 88-residue chain is Small ribosomal subunit protein bS20 (88 aa).

Residues 1-28 (MANTSSAKKATRKIARRTAVNKSRRTQM) form a disordered region.

In terms of biological role, binds directly to 16S ribosomal RNA. This is Small ribosomal subunit protein bS20 from Rhodopseudomonas palustris (strain ATCC BAA-98 / CGA009).